A 130-amino-acid polypeptide reads, in one-letter code: uncharacterized protein (130 aa).

A disordered region spans residues 1–62 (MRMYSSDAHE…ASGVGSSCKR (62 aa)). Pro residues predominate over residues 21 to 30 (PPHPLPPTGS).

This is an uncharacterized protein from Homo sapiens (Human).